The chain runs to 103 residues: Pyrimidine/purine nucleoside phosphorylase (103 aa).

It belongs to the nucleoside phosphorylase PpnP family.

It carries out the reaction a purine D-ribonucleoside + phosphate = a purine nucleobase + alpha-D-ribose 1-phosphate. The catalysed reaction is adenosine + phosphate = alpha-D-ribose 1-phosphate + adenine. It catalyses the reaction cytidine + phosphate = cytosine + alpha-D-ribose 1-phosphate. The enzyme catalyses guanosine + phosphate = alpha-D-ribose 1-phosphate + guanine. It carries out the reaction inosine + phosphate = alpha-D-ribose 1-phosphate + hypoxanthine. The catalysed reaction is thymidine + phosphate = 2-deoxy-alpha-D-ribose 1-phosphate + thymine. It catalyses the reaction uridine + phosphate = alpha-D-ribose 1-phosphate + uracil. The enzyme catalyses xanthosine + phosphate = alpha-D-ribose 1-phosphate + xanthine. In terms of biological role, catalyzes the phosphorolysis of diverse nucleosides, yielding D-ribose 1-phosphate and the respective free bases. Can use uridine, adenosine, guanosine, cytidine, thymidine, inosine and xanthosine as substrates. Also catalyzes the reverse reactions. The chain is Pyrimidine/purine nucleoside phosphorylase from Chlorobium chlorochromatii (strain CaD3).